A 447-amino-acid polypeptide reads, in one-letter code: N-succinylarginine dihydrolase (447 aa).

Substrate-binding positions include 19–28 (AGLSFGNEAS), asparagine 110, and 137–138 (HR). Glutamate 174 is an active-site residue. Arginine 212 is a substrate binding site. The active site involves histidine 248. Substrate contacts are provided by aspartate 250 and asparagine 359. Catalysis depends on cysteine 365, which acts as the Nucleophile.

This sequence belongs to the succinylarginine dihydrolase family. In terms of assembly, homodimer.

It catalyses the reaction N(2)-succinyl-L-arginine + 2 H2O + 2 H(+) = N(2)-succinyl-L-ornithine + 2 NH4(+) + CO2. It participates in amino-acid degradation; L-arginine degradation via AST pathway; L-glutamate and succinate from L-arginine: step 2/5. Its function is as follows. Catalyzes the hydrolysis of N(2)-succinylarginine into N(2)-succinylornithine, ammonia and CO(2). The chain is N-succinylarginine dihydrolase from Escherichia coli (strain SMS-3-5 / SECEC).